Reading from the N-terminus, the 77-residue chain is Dermatoxin-A1 (77 aa).

The first 22 residues, 1–22, serve as a signal peptide directing secretion; it reads MAFLKKSLFLVLFLGLVPLFLC. A propeptide spanning residues 23-42 is cleaved from the precursor; that stretch reads ENEKREGENEKEENDDQSEE. Position 76 is a glutamine amide (Gln76).

Belongs to the frog skin active peptide (FSAP) family. Dermatoxin subfamily. In terms of tissue distribution, expressed by the skin glands.

It is found in the secreted. Possesses a potent antimicrobial activity against Gram-positive and Gram-negative bacteria. Probably acts by disturbing membrane functions with its amphipathic structure. The chain is Dermatoxin-A1 from Agalychnis annae (Blue-sided leaf frog).